The sequence spans 94 residues: Putative septation protein SpoVG (94 aa).

This sequence belongs to the SpoVG family.

In terms of biological role, could be involved in septation. This is Putative septation protein SpoVG from Acholeplasma laidlawii (strain PG-8A).